A 161-amino-acid chain; its full sequence is Transcription elongation factor GreA (161 aa).

It belongs to the GreA/GreB family.

Necessary for efficient RNA polymerase transcription elongation past template-encoded arresting sites. The arresting sites in DNA have the property of trapping a certain fraction of elongating RNA polymerases that pass through, resulting in locked ternary complexes. Cleavage of the nascent transcript by cleavage factors such as GreA or GreB allows the resumption of elongation from the new 3'terminus. GreA releases sequences of 2 to 3 nucleotides. The polypeptide is Transcription elongation factor GreA (Desulfotalea psychrophila (strain LSv54 / DSM 12343)).